A 124-amino-acid polypeptide reads, in one-letter code: Ribonuclease pancreatic (124 aa).

The interval 1–23 (RESPAMKFQRQHMDSGNSPGNNP) is disordered. Residues K7 and R10 each coordinate substrate. H12 (proton acceptor) is an active-site residue. The segment covering 14–23 (DSGNSPGNNP) has biased composition (polar residues). Disulfide bonds link C26–C84, C40–C95, C58–C110, and C65–C72. Substrate contacts are provided by residues 41-45 (KPVNT) and K66. Residue N76 is glycosylated (N-linked (GlcNAc...) asparagine; partial). A substrate-binding site is contributed by R85. The active-site Proton donor is H119.

It belongs to the pancreatic ribonuclease family. As to quaternary structure, monomer. Interacts with and forms tight 1:1 complexes with RNH1. Dimerization of two such complexes may occur. Interaction with RNH1 inhibits this protein. In terms of tissue distribution, pancreas.

The protein resides in the secreted. It catalyses the reaction an [RNA] containing cytidine + H2O = an [RNA]-3'-cytidine-3'-phosphate + a 5'-hydroxy-ribonucleotide-3'-[RNA].. The catalysed reaction is an [RNA] containing uridine + H2O = an [RNA]-3'-uridine-3'-phosphate + a 5'-hydroxy-ribonucleotide-3'-[RNA].. Endonuclease that catalyzes the cleavage of RNA on the 3' side of pyrimidine nucleotides. Acts on single-stranded and double-stranded RNA. The chain is Ribonuclease pancreatic (RNASE1) from Balaenoptera acutorostrata (Common minke whale).